The chain runs to 68 residues: Conotoxin G1.9 (68 aa).

Positions 1 to 21 (MGMRMMFTVFLLVVLATTVVS) are cleaved as a signal peptide. Positions 22–44 (FTSRRGPKSRRGEPVPTTVINYG) are excised as a propeptide. Cystine bridges form between Cys46/Cys52 and Cys47/Cys61.

This sequence belongs to the conotoxin A superfamily. Expressed by the venom duct.

Its subcellular location is the secreted. Does not show activity on all the human nAChR subtypes studied. This chain is Conotoxin G1.9, found in Conus geographus (Geography cone).